The following is a 294-amino-acid chain: 4-hydroxy-tetrahydrodipicolinate synthase (294 aa).

Thr-45 contacts pyruvate. Tyr-133 (proton donor/acceptor) is an active-site residue. Residue Lys-161 is the Schiff-base intermediate with substrate of the active site. Ile-203 serves as a coordination point for pyruvate.

Belongs to the DapA family. Homotetramer; dimer of dimers.

The protein localises to the cytoplasm. The enzyme catalyses L-aspartate 4-semialdehyde + pyruvate = (2S,4S)-4-hydroxy-2,3,4,5-tetrahydrodipicolinate + H2O + H(+). Its pathway is amino-acid biosynthesis; L-lysine biosynthesis via DAP pathway; (S)-tetrahydrodipicolinate from L-aspartate: step 3/4. Functionally, catalyzes the condensation of (S)-aspartate-beta-semialdehyde [(S)-ASA] and pyruvate to 4-hydroxy-tetrahydrodipicolinate (HTPA). The protein is 4-hydroxy-tetrahydrodipicolinate synthase of Buchnera aphidicola subsp. Acyrthosiphon pisum (strain 5A).